Reading from the N-terminus, the 536-residue chain is Chaperonin GroEL (536 aa).

Residues threonine 30–proline 33, aspartate 86–threonine 90, glycine 414, and aspartate 494 each bind ATP.

Belongs to the chaperonin (HSP60) family. Forms a cylinder of 14 subunits composed of two heptameric rings stacked back-to-back. Interacts with the co-chaperonin GroES.

The protein resides in the cytoplasm. The enzyme catalyses ATP + H2O + a folded polypeptide = ADP + phosphate + an unfolded polypeptide.. Functionally, together with its co-chaperonin GroES, plays an essential role in assisting protein folding. The GroEL-GroES system forms a nano-cage that allows encapsulation of the non-native substrate proteins and provides a physical environment optimized to promote and accelerate protein folding. This is Chaperonin GroEL from Methanospirillum hungatei JF-1 (strain ATCC 27890 / DSM 864 / NBRC 100397 / JF-1).